A 467-amino-acid polypeptide reads, in one-letter code: Probable Xaa-Pro aminopeptidase pepP (467 aa).

Aspartate 264, aspartate 275, glutamate 398, and glutamate 438 together coordinate Mn(2+).

The protein belongs to the peptidase M24B family. Mn(2+) is required as a cofactor.

It catalyses the reaction Release of any N-terminal amino acid, including proline, that is linked to proline, even from a dipeptide or tripeptide.. Functionally, catalyzes the removal of a penultimate prolyl residue from the N-termini of peptides. The chain is Probable Xaa-Pro aminopeptidase pepP (pepP) from Neosartorya fischeri (strain ATCC 1020 / DSM 3700 / CBS 544.65 / FGSC A1164 / JCM 1740 / NRRL 181 / WB 181) (Aspergillus fischerianus).